A 474-amino-acid chain; its full sequence is Melanopsin (474 aa).

Over Met-1 to Thr-72 the chain is Extracellular. N-linked (GlcNAc...) asparagine glycans are attached at residues Asn-31 and Asn-35. A helical transmembrane segment spans residues Leu-73–Tyr-93. The Cytoplasmic portion of the chain corresponds to Thr-94 to Met-107. The helical transmembrane segment at Leu-108–Phe-128 threads the bilayer. Over Ala-129–Lys-144 the chain is Extracellular. An intrachain disulfide couples Cys-143 to Cys-221. Residues Phe-145–Ala-165 traverse the membrane as a helical segment. At Met-166–Ala-188 the chain is on the cytoplasmic side. A helical transmembrane segment spans residues Leu-189–Trp-209. The Extracellular portion of the chain corresponds to Ser-210–Leu-238. A helical membrane pass occupies residues Leu-239–Phe-259. Residues Arg-260–Lys-293 are Cytoplasmic-facing. A helical transmembrane segment spans residues Val-294–Leu-314. Residues Val-315–Arg-355 are Extracellular-facing. Lys-337 carries the N6-(retinylidene)lysine modification. A helical membrane pass occupies residues Ala-356 to Ser-372. Residues Gly-373–Met-474 are Cytoplasmic-facing. A disordered region spans residues Ala-428 to Met-474.

This sequence belongs to the G-protein coupled receptor 1 family. Opsin subfamily. Eye; expressed in a photosensitive subset of retinal ganglion cells (at protein level).

Its subcellular location is the cell membrane. It is found in the cell projection. The protein localises to the axon. It localises to the dendrite. The protein resides in the perikaryon. Its function is as follows. Photoreceptor that binds cis-retinaldehydes. Contributes to pupillar reflex, photoentrainment and other non-image forming responses to light. May be involved in the optokinetic visual tracking response. May be involved in the regulation of retinal hyaloid vessel growth and regression. In Rattus norvegicus (Rat), this protein is Melanopsin.